The following is a 638-amino-acid chain: Keratin, type II cytoskeletal 2 oral (638 aa).

The tract at residues 1–182 is head; the sequence is MNRQVCKKSF…DPQIGQVKAQ (182 aa). 2 positions are modified to omega-N-methylarginine: Arg85 and Arg110. The segment at 183–218 is coil 1A; it reads EREQIKTLNNKFASFIDKVRFLEQQNKVLETKWELL. Positions 183 to 496 constitute an IF rod domain; the sequence is EREQIKTLNN…KLLEGEECRM (314 aa). The interval 219–237 is linker 1; sequence QQQTTGSGPSSLEPCFESY. Positions 238–329 are coil 1B; that stretch reads ISFLCKQLDS…TLYEMELSQM (92 aa). A linker 12 region spans residues 330–353; sequence QSHASDTSVVLSMDNNRCLDLGSI. A coil 2 region spans residues 354–492; sequence IAEVRAQYEE…ATYRKLLEGE (139 aa). The segment at 493–638 is tail; it reads ECRMSGECQS…TSSSQHSSTK (146 aa). The segment at 532–638 is disordered; the sequence is SGSGGYKGGS…TSSSQHSSTK (107 aa). The segment covering 540 to 549 has biased composition (low complexity); the sequence is GSSSSSSSGY. Residues 550–572 are compositionally biased toward gly residues; that stretch reads GVSGGSGSGYGGVSSGSTGGRGS. Over residues 573-583 the composition is skewed to low complexity; sequence SGSYQSSSSGS. Position 584 is an omega-N-methylarginine (Arg584). A compositionally biased stretch (low complexity) spans 590–608; that stretch reads SISVSHSGMGSSSGSIQTS. Gly residues predominate over residues 609–620; sequence GGSGYKSGGGGS. Positions 626 to 638 are enriched in low complexity; the sequence is SQTTSSSQHSSTK.

This sequence belongs to the intermediate filament family. As to quaternary structure, heterotetramer of two type I and two type II keratins.

Probably contributes to terminal cornification. The protein is Keratin, type II cytoskeletal 2 oral (KRT76) of Homo sapiens (Human).